The following is a 185-amino-acid chain: UPF0669 protein C6orf120 homolog (185 aa).

A signal peptide spans 1-23; the sequence is MATPWRRALLMILASQVVTLVKC. Asparagine 47 is a glycosylation site (N-linked (GlcNAc...) asparagine).

Belongs to the UPF0669 family.

It localises to the secreted. Its function is as follows. May be involved in induction of apoptosis in CD4(+) T-cells, but not CD8(+) T-cells or hepatocytes. This is UPF0669 protein C6orf120 homolog from Mus musculus (Mouse).